Here is a 467-residue protein sequence, read N- to C-terminus: Phytase A (467 aa).

The signal sequence occupies residues 1 to 23; the sequence is MGVSAVLLPLYLLAGVTSGLAVP. A glycan (N-linked (GlcNAc...) asparagine) is linked at Asn-27. A disulfide bridge connects residues Cys-31 and Cys-40. The 1D-myo-inositol hexakisphosphate site is built by Gln-50 and Tyr-51. Residue Asn-59 is glycosylated (N-linked (GlcNAc...) asparagine). 4 disulfide bridges follow: Cys-71–Cys-414, Cys-215–Cys-465, Cys-264–Cys-282, and Cys-436–Cys-444. 1D-myo-inositol hexakisphosphate is bound by residues Arg-81, His-82, Arg-85, and Thr-88. The Nucleophile role is filled by His-82. Residues Asn-105 and Asn-120 are each glycosylated (N-linked (GlcNAc...) asparagine). Arg-165 lines the 1D-myo-inositol hexakisphosphate pocket. Residues Asn-207 and Asn-230 are each glycosylated (N-linked (GlcNAc...) asparagine). Position 301 (Lys-301) interacts with 1D-myo-inositol hexakisphosphate. Residues Asn-339 and Asn-352 are each glycosylated (N-linked (GlcNAc...) asparagine). Residues His-361 and Asp-362 each contribute to the 1D-myo-inositol hexakisphosphate site. Asn-376 and Asn-388 each carry an N-linked (GlcNAc...) asparagine glycan.

It belongs to the histidine acid phosphatase family. As to quaternary structure, monomer.

It is found in the secreted. The catalysed reaction is 1D-myo-inositol hexakisphosphate + H2O = 1D-myo-inositol 1,2,4,5,6-pentakisphosphate + phosphate. The enzyme catalyses 1D-myo-inositol 1,2,4,5,6-pentakisphosphate + H2O = 1D-myo-inositol 1,2,5,6-tetrakisphosphate + phosphate. It catalyses the reaction 1D-myo-inositol 1,2,5,6-tetrakisphosphate + H2O = 1D-myo-inositol 1,2,6-trisphosphate + phosphate. It carries out the reaction 1D-myo-inositol 1,2,6-trisphosphate + H2O = 1D-myo-inositol 1,2-bisphosphate + phosphate. The catalysed reaction is 1D-myo-inositol 1,2-bisphosphate + H2O = 1D-myo-inositol 2-phosphate + phosphate. Catalyzes the phosphate monoester hydrolysis of phytic acid (myo-inositol hexakisphosphate), which results in the stepwise formation of myo-inositol pentakis-, tetrakis-, tris-, bis-, and monophosphates, as well as the liberation of inorganic phosphate. Myo-inositol 2-monophosphate is the end product. The protein is Phytase A (phyA) of Aspergillus awamori (Black koji mold).